A 60-amino-acid polypeptide reads, in one-letter code: Metallothionein B (60 aa).

Positions M1–C28 are beta. Positions 4, 6, 12, 14, 18, 20, 23, 25, 28, 32, 33, 35, 36, 40, 43, 47, 49, 54, 58, and 59 each coordinate a divalent metal cation. Positions K29 to Q60 are alpha.

This sequence belongs to the metallothionein superfamily. Type 1 family.

Its function is as follows. Metallothioneins have a high content of cysteine residues that bind various heavy metals. This chain is Metallothionein B (mtb), found in Trematomus bernacchii (Emerald rockcod).